A 232-amino-acid chain; its full sequence is MTEPTDFQLLELATPYALHAVSDEERLDIERRLSAAPAPVAAAFDEEVRSVRETMSVVSAATAAQPPAELRQALLAAAEPAQSRRQPRWRTAVFASAAAIAVGLGAFGLGVLTRPSASPTVAEQVLAAPDVQTVSGRLGGGTATVMFSRDRNAGVLVMNNVPPPSPGTVYQMWLVDAKGPTSAGTMGPTAVTPSTKATLTDLGDSTTLAFTVEPGTGSTKPTGTVLAELPLR.

The Cytoplasmic segment spans residues Met-1–Thr-91. Residues Ala-92–Leu-112 form a helical membrane-spanning segment. Residues Thr-113 to Arg-232 lie on the Extracellular side of the membrane.

The protein belongs to the anti-sigma-K factor family.

It is found in the cell membrane. In terms of biological role, an anti-sigma factor for extracytoplasmic function (ECF) sigma factor SigK. ECF sigma factors are held in an inactive form by an anti-sigma factor until released by regulated intramembrane proteolysis (RIP). RIP occurs when an extracytoplasmic signal triggers a concerted proteolytic cascade to transmit information and elicit cellular responses. The membrane-spanning regulatory substrate protein is first cut extracytoplasmically (site-1 protease, S1P), then within the membrane itself (site-2 protease, S2P, Rip1), while cytoplasmic proteases finish degrading the regulatory protein, liberating the sigma factor. This Mycobacterium ulcerans (strain Agy99) protein is Anti-sigma-K factor RskA (rskA).